A 140-amino-acid polypeptide reads, in one-letter code: ATP synthase epsilon chain (140 aa).

It belongs to the ATPase epsilon chain family. In terms of assembly, F-type ATPases have 2 components, CF(1) - the catalytic core - and CF(0) - the membrane proton channel. CF(1) has five subunits: alpha(3), beta(3), gamma(1), delta(1), epsilon(1). CF(0) has three main subunits: a, b and c.

The protein resides in the cell inner membrane. Produces ATP from ADP in the presence of a proton gradient across the membrane. The sequence is that of ATP synthase epsilon chain from Yersinia pseudotuberculosis serotype O:1b (strain IP 31758).